The primary structure comprises 141 residues: Arsenate reductase (141 aa).

The active-site Nucleophile; cysteine thioarsenate intermediate is Cys12.

The protein belongs to the ArsC family.

It catalyses the reaction [glutaredoxin]-dithiol + arsenate + glutathione + H(+) = glutathionyl-S-S-[glutaredoxin] + arsenite + H2O. In terms of biological role, involved in resistance to arsenate. Catalyzes the reduction of arsenate [As(V)] to arsenite [As(III)]. The chain is Arsenate reductase from Escherichia coli.